The primary structure comprises 474 residues: Uronate isomerase (474 aa).

The protein belongs to the metallo-dependent hydrolases superfamily. Uronate isomerase family.

It carries out the reaction D-glucuronate = D-fructuronate. It catalyses the reaction aldehydo-D-galacturonate = keto-D-tagaturonate. It participates in carbohydrate metabolism; pentose and glucuronate interconversion. The polypeptide is Uronate isomerase (Photorhabdus laumondii subsp. laumondii (strain DSM 15139 / CIP 105565 / TT01) (Photorhabdus luminescens subsp. laumondii)).